A 146-amino-acid chain; its full sequence is Hemoglobin subunit beta-1 (146 aa).

A Globin domain is found at 2–146; that stretch reads HWTAEEKQLI…VAHALARRYH (145 aa). H63 and H92 together coordinate heme b.

This sequence belongs to the globin family. Heterotetramer of two alpha chains and two beta chains. Red blood cells.

Involved in oxygen transport from the lung to the various peripheral tissues. The sequence is that of Hemoglobin subunit beta-1 (HBB1) from Iguana iguana (Common iguana).